We begin with the raw amino-acid sequence, 208 residues long: MGKKRSVSSQRWLKEHFDDQFVQKAQKKGLRSRAVFKLEEIQKRDKLIKKGQTVVDLGAAPGGWSQYVADYFNGDGQIIACDILAMDPIAGVDFLQGDFREESVLEALLERIGGKNVDVVLSDMAPNMSGNGTVDQARSMYLVELALDMCHQVLKPGGSFAVKVFQGQGFESFLKDVRAAFNDVKTRKPESSRARSREVYLVATDYKL.

5 residues coordinate S-adenosyl-L-methionine: Gly62, Trp64, Asp82, Asp98, and Asp123. The Proton acceptor role is filled by Lys163.

It belongs to the class I-like SAM-binding methyltransferase superfamily. RNA methyltransferase RlmE family.

It is found in the cytoplasm. It carries out the reaction uridine(2552) in 23S rRNA + S-adenosyl-L-methionine = 2'-O-methyluridine(2552) in 23S rRNA + S-adenosyl-L-homocysteine + H(+). In terms of biological role, specifically methylates the uridine in position 2552 of 23S rRNA at the 2'-O position of the ribose in the fully assembled 50S ribosomal subunit. The protein is Ribosomal RNA large subunit methyltransferase E of Idiomarina loihiensis (strain ATCC BAA-735 / DSM 15497 / L2-TR).